Here is a 627-residue protein sequence, read N- to C-terminus: Monoterpene synthase like 1, chloroplastic (627 aa).

A chloroplast-targeting transit peptide spans 1 to 50 (MDLISVLPSTSKSCVCMHKPLSSSTHKLKPFCRTIRILGMPRPRKSVLMA). Mg(2+) contacts are provided by D378, D382, and D530. The short motif at 378–382 (DDMYD) is the DDXXD motif element.

The protein belongs to the terpene synthase family. Tpsd subfamily. It depends on Mg(2+) as a cofactor. Mn(2+) serves as cofactor.

The protein resides in the plastid. It is found in the chloroplast. Its pathway is terpene metabolism; oleoresin biosynthesis. It participates in secondary metabolite biosynthesis; terpenoid biosynthesis. Its function is as follows. Monoterpene synthase (TPS) involved in the biosynthesis of monoterpene natural products included in conifer oleoresin secretions and volatile emissions; these compounds contribute to biotic and abiotic stress defense against herbivores and pathogens. This Pinus contorta (Shore pine) protein is Monoterpene synthase like 1, chloroplastic.